The primary structure comprises 568 residues: Lipoprotein LpqB (568 aa).

Positions 1 to 23 (MSKISTKLKALSAVLSVTTLVAG) are cleaved as a signal peptide. Cys24 carries N-palmitoyl cysteine lipidation. Cys24 carries the S-diacylglycerol cysteine lipid modification.

It belongs to the LpqB lipoprotein family.

The protein localises to the cell membrane. In Corynebacterium glutamicum (strain R), this protein is Lipoprotein LpqB.